The following is a 204-amino-acid chain: ATP phosphoribosyltransferase (204 aa).

This sequence belongs to the ATP phosphoribosyltransferase family. Short subfamily. Heteromultimer composed of HisG and HisZ subunits.

Its subcellular location is the cytoplasm. The catalysed reaction is 1-(5-phospho-beta-D-ribosyl)-ATP + diphosphate = 5-phospho-alpha-D-ribose 1-diphosphate + ATP. It participates in amino-acid biosynthesis; L-histidine biosynthesis; L-histidine from 5-phospho-alpha-D-ribose 1-diphosphate: step 1/9. Its function is as follows. Catalyzes the condensation of ATP and 5-phosphoribose 1-diphosphate to form N'-(5'-phosphoribosyl)-ATP (PR-ATP). Has a crucial role in the pathway because the rate of histidine biosynthesis seems to be controlled primarily by regulation of HisG enzymatic activity. The chain is ATP phosphoribosyltransferase from Campylobacter concisus (strain 13826).